A 288-amino-acid chain; its full sequence is Protein sprouty homolog 3 (288 aa).

Positions 154 to 267 constitute an SPR domain; the sequence is KCVPCTAVRP…PGCRCKRHTN (114 aa).

It belongs to the sprouty family. Interacts with TESK1. Interacts with USP11. Interacts with CAV1 (via C-terminus). In terms of tissue distribution, expressed in the brain with expression the highest in Purkinje cell bodies and projections in the cerebellum (at protein level). Also expressed in central and peripheral nervous system ganglion cells, superior cervical ganglion and dorsal root ganglion (at protein level). Expressed in the retinal ganglion cell layer and the inner nuclear layer (at protein level).

It is found in the cytoplasm. Functionally, inhibits neurite branching, arbor length and neurite complexity. Inhibits EGF-mediated p42/44 ERK signaling. Negatively regulates the MAPK cascade, resulting in a reduction of extracellular matrix protein accumulation. May function as an antagonist of fibroblast growth factor (FGF) pathways and may negatively modulate respiratory organogenesis. The polypeptide is Protein sprouty homolog 3 (Mus musculus (Mouse)).